The following is a 114-amino-acid chain: Ribonuclease P protein component (114 aa).

The protein belongs to the RnpA family. In terms of assembly, consists of a catalytic RNA component (M1 or rnpB) and a protein subunit.

The enzyme catalyses Endonucleolytic cleavage of RNA, removing 5'-extranucleotides from tRNA precursor.. Functionally, RNaseP catalyzes the removal of the 5'-leader sequence from pre-tRNA to produce the mature 5'-terminus. It can also cleave other RNA substrates such as 4.5S RNA. The protein component plays an auxiliary but essential role in vivo by binding to the 5'-leader sequence and broadening the substrate specificity of the ribozyme. In Exiguobacterium sp. (strain ATCC BAA-1283 / AT1b), this protein is Ribonuclease P protein component.